The following is a 1435-amino-acid chain: MLMSLTNEQQERFQILLQQLQIPDDLINQYLQGGGIERLVIDKANKSWHFDLQVPRILPTELYELLETKLKQSFSHIARTTFALETENKQFTEEEVRAYWPLCTERITFSPMFAYLKKQLPQVNGVKLLINVNNELESTALKKNVAKPVGDQYEVFGFPRFQLDTHIQQNTEEMQKFREQTQQEDRERVIQAMEEMAKKQAEESSVVYEGPITLGYLIKPDEEITPMREIQDEERRKTVQGYVFHVETKELRSGRTLLTLKITDYTDSIMIKMFSRDKEDIPMLQSLKKGMWVKARGSVQNDTFVRDLVMIANDINEITGPSRKDKAPEGEKRVELHLHTPMSQMDAVTPVSKLVAQAGKWGHEAIAVTDHAVAQSFPEAYSAGKKAGVKVIYGVEANLVNDGVPIAYNEAHRLLAEETYVVFDVETTGLSAVYDTVIELAAVKVKGGEIIDRFESFANPHQPLSATIIELTGITDDMLTDAPEVDEVFKKFEEWMGDHTLVAHNASFDMGFINVGFKKAGLEKTNNPVIDTLELARFLFPEMKNHRLNTMCKKLDIELTQHHRAIYDTEATGYLLVKMLKDVIEKGFEYHDQLNDSMGQGDAYKRGRPSHMTLLATSDVGLKNLYKLVSYSHLNYFYRVPRVPRSLLKKYREGILVGTACDKGEVFEAMMQKAPEEVEEIAQFYDYIEVMPPEVLRHLVERELVRDEGQLKTIISNLVKLGETLDKPVVATGNVHYLDPEDAMYRKILVSSQGGANPLNRHSLPPVHFRTTDEMLECFSFLGEDKAKEVVVTNTQKIASLIGDVHPVKDDLYTPKIEGADDETRDMSYKMARSIYGEELPEIVEARLEKELKSIIGHGFAVIYLISHKLVKKSLVDGYLVGSRGSVGSSFVATMMEITEVNPLPPHYVCPKCKQSEFFNDGSVGSGFDLPDKECPACNIPYVKDGHDIPFETFLGFKGDKVPDIDLNFSGEYQPRAHNYTKVLFGEDYVYRAGTIGTVAEKTAYGYVKGYANDHNLTIRNAEIDRLVAGCTGVKRTTGQHPGGIIVVPDYMDIFDFSPIQYPADSIGAEWRTTHFDFHSIHDNLLKLDILGHDDPTVIRMLQDLSGIDPKTIPTDDPEVMKIFSGPESLGVTEEQINCKTGTLGIPEFGTKFVRQMLEETKPTTFSELVQISGLSHGTDVWLGNANELIYNGTCTLSEVIGCRDDIMVYLIYQGLDPSLAFKIMESVRKGKGVPEEWEEDMKNNNVPGWYIDSCKKIKYMFPKAHAAAYVLMAVRIAYFKVHFALLFYAAYFTVRADDFDVEAMAKGSASIRARIDEIAQKGLDAAPKEKSLLTVLEMTLEMCERGYSFQKVDLYRSHATEFIIDGDTLIPPFNAVPGLGTNAALSIVEARKNGDFLSKEDLQQRSKVSKTIIEYLDSQGCLGDLPDQNQLSLF.

Positions 420–576 (YVVFDVETTG…YDTEATGYLL (157 aa)) constitute an Exonuclease domain.

It belongs to the DNA polymerase type-C family. PolC subfamily.

It localises to the cytoplasm. It carries out the reaction DNA(n) + a 2'-deoxyribonucleoside 5'-triphosphate = DNA(n+1) + diphosphate. Required for replicative DNA synthesis. This DNA polymerase also exhibits 3' to 5' exonuclease activity. The polypeptide is DNA polymerase III PolC-type (Bacillus cereus (strain ATCC 14579 / DSM 31 / CCUG 7414 / JCM 2152 / NBRC 15305 / NCIMB 9373 / NCTC 2599 / NRRL B-3711)).